The primary structure comprises 614 residues: DNA double-strand break repair protein Mre11 (614 aa).

Residues Asp-12, His-14, Asp-53, and Asn-88 each contribute to the Mn(2+) site. His-89 (proton donor) is an active-site residue. Mn(2+) is bound by residues His-158, Asp-189, and His-191. Disordered regions lie at residues 393-434 (ASPI…SPDI) and 487-614 (ALKK…GDYL). Residues 411–425 (PVSSADSVSAVSPES) show a composition bias toward low complexity. Basic and acidic residues-rich tracts occupy residues 487–502 (ALKK…REAP), 535–558 (VPEK…KETG), and 568–591 (GSEK…EKPV).

It belongs to the MRE11/RAD32 family. Homodimer. Forms a heterotetramer composed of two Mre11 subunits and two Rad50 subunits. Mn(2+) is required as a cofactor.

Its activity is regulated as follows. Nuclease activity is regulated by Rad50. Functionally, part of the Rad50/Mre11 complex, which is involved in the early steps of DNA double-strand break (DSB) repair. The complex may facilitate opening of the processed DNA ends to aid in the recruitment of HerA and NurA. Mre11 binds to DSB ends and has both double-stranded 3'-5' exonuclease activity and single-stranded endonuclease activity. This chain is DNA double-strand break repair protein Mre11, found in Methanosarcina acetivorans (strain ATCC 35395 / DSM 2834 / JCM 12185 / C2A).